Here is a 391-residue protein sequence, read N- to C-terminus: Flagellin (391 aa).

Belongs to the bacterial flagellin family.

Its subcellular location is the secreted. It localises to the bacterial flagellum. Flagellin is the subunit protein which polymerizes to form the filaments of bacterial flagella. In Bordetella bronchiseptica (strain ATCC BAA-588 / NCTC 13252 / RB50) (Alcaligenes bronchisepticus), this protein is Flagellin (flaA).